A 430-amino-acid polypeptide reads, in one-letter code: Mannan endo-1,4-beta-mannosidase (430 aa).

Residue glutamate 173 is the Proton donor of the active site. Glutamate 269 functions as the Nucleophile in the catalytic mechanism. CBM10 domains are found at residues 357–390 (SCGT…CVVA) and 395–424 (SCNW…CIAA).

It belongs to the glycosyl hydrolase 5 (cellulase A) family.

It carries out the reaction Random hydrolysis of (1-&gt;4)-beta-D-mannosidic linkages in mannans, galactomannans and glucomannans.. In terms of biological role, catalyzes the endo hydrolysis of beta-1,4-linked mannan, galactomannan and glucomannan. It is able to hydrolyze mannosidic linkages that are flanked by mannose or glucose. In Cellvibrio japonicus (strain Ueda107) (Pseudomonas fluorescens subsp. cellulosa), this protein is Mannan endo-1,4-beta-mannosidase.